The primary structure comprises 793 residues: Serine/threonine-protein kinase MARK1 (793 aa).

Positions 1–40 (MSARTPLPTVNERDTENHTSVDGYTETHIPPTKSSSRQNI) are disordered. Thr5 is modified (phosphothreonine). In terms of domain architecture, Protein kinase spans 60 to 311 (YRLQKTIGKG…LEQIMKDRWM (252 aa)). Residues 66–74 (IGKGNFAKV) and Lys89 each bind ATP. The Proton acceptor role is filled by Asp182. Thr208 is subject to Phosphothreonine. Phosphothreonine; by LKB1 and TAOK1 is present on Thr215. Ser219 carries the phosphoserine; by GSK3-beta modification. In terms of domain architecture, UBA spans 329–370 (DLNDAKRIDIMVTMGFARDEINDALVSQKYDEVMATYILLGR). Disordered stretches follow at residues 377–499 (GGES…GGSM) and 517–697 (LQNG…KPRS). Over residues 380 to 403 (SLSSGNLCQRSRPSSDLNNSTLQS) the composition is skewed to polar residues. Residues Ser382, Ser390, Ser393, Ser403, Ser423, and Ser444 each carry the phosphoserine modification. Residues 447-459 (SEQKEEWDKDTAR) are compositionally biased toward basic and acidic residues. Residues 462–473 (GSTTVGSKSEVT) show a composition bias toward polar residues. Ser475 is subject to Phosphoserine. The segment covering 487-499 (AGPSNNVYSGGSM) has biased composition (polar residues). Low complexity-rich tracts occupy residues 523–547 (SSLTEMSASSMSSTGSTVASAGPSA) and 585–599 (PAASPSAHSISASTP). Ser588 bears the Phosphoserine mark. Position 613 is a phosphothreonine; by PKC/PRKCZ (Thr613). A compositionally biased stretch (polar residues) spans 647–657 (GTSTGIISKIT). 2 stretches are compositionally biased toward basic and acidic residues: residues 661–676 (VRRDPSEGEASGRTDT) and 683–695 (EPKDKEEGKEAKP). Position 666 is a phosphoserine (Ser666). Residues 744–793 (DARQDSLVQWEMEVCKLPRLSLNGVRFKRISGTSIAFKNIASKIANELKL) enclose the KA1 domain.

It belongs to the protein kinase superfamily. CAMK Ser/Thr protein kinase family. SNF1 subfamily. In terms of assembly, interacts with MAPT/TAU. Mg(2+) serves as cofactor. Post-translationally, phosphorylation at Thr-613 by PRKCZ/aPKC in polarized epithelial cells inhibits the kinase activity. Phosphorylated at Thr-215 by STK11/LKB1 in complex with STE20-related adapter-alpha (STRADA) pseudo kinase and CAB39. Phosphorylation at Thr-215 by TAOK1 activates the kinase activity, leading to phosphorylation and detachment of MAPT/TAU from microtubules. Phosphorylation at Ser-219 by GSK3-beta (GSK3B) inhibits the kinase activity. In terms of tissue distribution, highly expressed in brain and spleen and at lower levels in kidney and skeletal muscle.

The protein localises to the cell membrane. It is found in the cytoplasm. It localises to the cytoskeleton. The protein resides in the cell projection. Its subcellular location is the dendrite. It catalyses the reaction L-seryl-[protein] + ATP = O-phospho-L-seryl-[protein] + ADP + H(+). The catalysed reaction is L-threonyl-[protein] + ATP = O-phospho-L-threonyl-[protein] + ADP + H(+). It carries out the reaction L-seryl-[tau protein] + ATP = O-phospho-L-seryl-[tau protein] + ADP + H(+). The enzyme catalyses L-threonyl-[tau protein] + ATP = O-phospho-L-threonyl-[tau protein] + ADP + H(+). With respect to regulation, activated by phosphorylation on Thr-215. Inhibited by phosphorylation at Ser-219. In terms of biological role, serine/threonine-protein kinase. Involved in cell polarity and microtubule dynamics regulation. Phosphorylates DCX, MAP2 and MAP4. Phosphorylates the microtubule-associated protein MAPT/TAU. Involved in cell polarity by phosphorylating the microtubule-associated proteins MAP2, MAP4 and MAPT/TAU at KXGS motifs, causing detachment from microtubules, and their disassembly. Involved in the regulation of neuronal migration through its dual activities in regulating cellular polarity and microtubule dynamics, possibly by phosphorylating and regulating DCX. Also acts as a positive regulator of the Wnt signaling pathway, probably by mediating phosphorylation of dishevelled proteins (DVL1, DVL2 and/or DVL3). This chain is Serine/threonine-protein kinase MARK1, found in Rattus norvegicus (Rat).